The primary structure comprises 152 residues: ALK and LTK ligand 1 (152 aa).

The first 23 residues, 1–23 (MRAEKRWHILLSMILLLITSSQC), serve as a signal peptide directing secretion. 2 cysteine pairs are disulfide-bonded: C113-C149 and C127-C136.

The protein belongs to the ALKAL family. Expressed at low level in the notochord and iridophore stripes, the eye and the swim bladder.

The protein localises to the secreted. Its subcellular location is the cell membrane. Functionally, cytokine that acts as a physiological ligand for receptor tyrosine kinases LTK and ALK. Required for iridophore development in the adult eye by acting as a receptor for LTK. The chain is ALK and LTK ligand 1 from Danio rerio (Zebrafish).